The chain runs to 310 residues: Ninja-family protein 3 (310 aa).

3 disordered regions span residues 1-29 (MASRDFLGRFGGEKGASSDKAGGGAGEPD), 68-140 (SLPG…DDAQ), and 156-215 (DQGN…EQPP). The segment covering 99-108 (ERWRRREMQS) has biased composition (basic and acidic residues). Polar residues-rich tracts occupy residues 156 to 166 (DQGNASSSMPE) and 176 to 193 (KSTSSMEISSDNNNQNKS).

Belongs to the Ninja family.

The protein localises to the nucleus. The sequence is that of Ninja-family protein 3 (AFP-D1) from Triticum aestivum (Wheat).